The primary structure comprises 200 residues: H-2 class I histocompatibility antigen, Q9 alpha chain (200 aa).

The first 21 residues, 1–21, serve as a signal peptide directing secretion; the sequence is MALTMLLLLVAAALTLIETRA. An alpha-1 region spans residues 22–111; the sequence is GQHSLQYFHT…AQSYYNQSKG (90 aa). Residues 22-200 lie on the Extracellular side of the membrane; sequence GQHSLQYFHT…RYLELGKETL (179 aa). N-linked (GlcNAc...) asparagine glycosylation occurs at Asn107. Positions 112 to 200 are alpha-2; the sequence is GSHTLQWMYG…RYLELGKETL (89 aa). Cysteines 122 and 185 form a disulfide.

The protein belongs to the MHC class I family. In terms of assembly, heterodimer of an alpha chain and a beta chain (beta-2-microglobulin).

It localises to the membrane. Its function is as follows. Involved in the presentation of foreign antigens to the immune system. This Mus musculus (Mouse) protein is H-2 class I histocompatibility antigen, Q9 alpha chain (H2-Q9).